The chain runs to 292 residues: T-box transcription factor tbx-9 (292 aa).

A DNA-binding region (T-box) is located at residues 10 to 194 (GSQETLWKIF…HNSFAKGFRD (185 aa)). Disordered stretches follow at residues 192-227 (FRDG…EVAP) and 265-292 (STPS…DIVG). 2 stretches are compositionally biased toward low complexity: residues 204-223 (PSYS…RSPP) and 265-275 (STPSSSSSELS). Acidic residues predominate over residues 280 to 292 (EDQEVEEDIDIVG).

It is found in the nucleus. Its function is as follows. Transcription factor. Involved in the control of early morphogenesis of the intestine, hypodermis and body-wall muscle. Involved in regulating expression of vab-7. Appears to have partially redundant function to tbx-8. Positively modulates expression of homeobox protein lin-39, perhaps by binding to regulatory regions of the lin-39 gene, acting in the vulval lineage. In Caenorhabditis elegans, this protein is T-box transcription factor tbx-9 (tbx-9).